The primary structure comprises 376 residues: Phytanoyl-CoA hydroxylase-interacting protein-like (376 aa).

The region spanning 52-161 is the Fibronectin type-III domain; sequence VPHNIKISNI…EIIEFCTADY (110 aa).

This sequence belongs to the PHYHIP family.

Its function is as follows. May play a role in the development of the central system. The protein is Phytanoyl-CoA hydroxylase-interacting protein-like (phyhipl) of Xenopus laevis (African clawed frog).